The chain runs to 615 residues: Dihydroxy-acid dehydratase (615 aa).

Asp81 contributes to the Mg(2+) binding site. Cys122 contacts [2Fe-2S] cluster. Mg(2+) is bound by residues Asp123 and Lys124. Lys124 carries the N6-carboxylysine modification. Position 195 (Cys195) interacts with [2Fe-2S] cluster. Position 491 (Glu491) interacts with Mg(2+). Ser517 functions as the Proton acceptor in the catalytic mechanism.

The protein belongs to the IlvD/Edd family. Homodimer. [2Fe-2S] cluster is required as a cofactor. The cofactor is Mg(2+).

It carries out the reaction (2R)-2,3-dihydroxy-3-methylbutanoate = 3-methyl-2-oxobutanoate + H2O. The enzyme catalyses (2R,3R)-2,3-dihydroxy-3-methylpentanoate = (S)-3-methyl-2-oxopentanoate + H2O. The protein operates within amino-acid biosynthesis; L-isoleucine biosynthesis; L-isoleucine from 2-oxobutanoate: step 3/4. It functions in the pathway amino-acid biosynthesis; L-valine biosynthesis; L-valine from pyruvate: step 3/4. In terms of biological role, functions in the biosynthesis of branched-chain amino acids. Catalyzes the dehydration of (2R,3R)-2,3-dihydroxy-3-methylpentanoate (2,3-dihydroxy-3-methylvalerate) into 2-oxo-3-methylpentanoate (2-oxo-3-methylvalerate) and of (2R)-2,3-dihydroxy-3-methylbutanoate (2,3-dihydroxyisovalerate) into 2-oxo-3-methylbutanoate (2-oxoisovalerate), the penultimate precursor to L-isoleucine and L-valine, respectively. This is Dihydroxy-acid dehydratase from Shewanella pealeana (strain ATCC 700345 / ANG-SQ1).